We begin with the raw amino-acid sequence, 218 residues long: MPSTRYQKINAHHYRHIWVVGDIHGEYQLLQSRLHQLSFFPKIDLLISVGDNIDRGPESLDVLRLLNQPWFTSVKGNHEAMALEAFETGDGNMWLASGGDWFFDLNDSEQQEAIDLLLKFHHLPHIIEITNDNIKYAIAHADYPGSEYLFGKEIAESELLWPVDRVQKSLNGELQQINGADYFIFGHMMFDNIQTFANQIYIDTGSPNSGRLSFYKIK.

Mn(2+) contacts are provided by aspartate 22, histidine 24, aspartate 51, and asparagine 77. Histidine 78 serves as the catalytic Proton donor. Histidine 187 contributes to the Mn(2+) binding site.

Belongs to the PPP phosphatase family. Requires Mn(2+) as cofactor.

It catalyses the reaction O-phospho-L-seryl-[protein] + H2O = L-seryl-[protein] + phosphate. It carries out the reaction O-phospho-L-threonyl-[protein] + H2O = L-threonyl-[protein] + phosphate. Functionally, has been shown, in vitro, to act on Ser, Thr and Tyr-phosphorylated substrates. The protein is Serine/threonine-protein phosphatase 2 (pphB) of Escherichia coli (strain K12).